The chain runs to 669 residues: Elongation factor G 2 (669 aa).

The tr-type G domain maps to 1–276; the sequence is MGIRNIGIMA…SIVDYLPSPF (276 aa). Residues 10-17, 74-78, and 128-131 contribute to the GTP site; these read AHIDAGKT, DTPGH, and NKMD.

It belongs to the TRAFAC class translation factor GTPase superfamily. Classic translation factor GTPase family. EF-G/EF-2 subfamily.

It is found in the cytoplasm. Functionally, catalyzes the GTP-dependent ribosomal translocation step during translation elongation. During this step, the ribosome changes from the pre-translocational (PRE) to the post-translocational (POST) state as the newly formed A-site-bound peptidyl-tRNA and P-site-bound deacylated tRNA move to the P and E sites, respectively. Catalyzes the coordinated movement of the two tRNA molecules, the mRNA and conformational changes in the ribosome. This Borreliella afzelii (strain PKo) (Borrelia afzelii) protein is Elongation factor G 2 (fusA2).